The primary structure comprises 603 residues: 65-kDa microtubule-associated protein 7 (603 aa).

Coiled-coil stretches lie at residues 48-79 (KECL…EAEI), 131-186 (DIKA…EKSD), and 468-502 (RLVS…LLIK). The interval 501–559 (IKRRESIYGSKPSPRRSNSVRKTNGYNGDASVPPTPRRNSAGATNNDIMTTPRSYSSHR) is disordered. S513 is modified (phosphoserine). 2 stretches are compositionally biased toward polar residues: residues 515-526 (RRSNSVRKTNGY) and 537-559 (RRNS…SSHR). The residue at position 599 (S599) is a Phosphoserine.

It belongs to the MAP65/ASE1 family. As to quaternary structure, forms dimer. Binds to microtubules (MT).

The protein resides in the nucleus. Its subcellular location is the cytoplasm. It localises to the cytoskeleton. The protein localises to the spindle pole. This chain is 65-kDa microtubule-associated protein 7 (MAP65-7), found in Arabidopsis thaliana (Mouse-ear cress).